Consider the following 395-residue polypeptide: Protein PELOTA 2 (395 aa).

Belongs to the eukaryotic release factor 1 family. Pelota subfamily. The cofactor is a divalent metal cation.

The protein resides in the cytoplasm. It is found in the nucleus. Its function is as follows. Component of the Pelota-HBS1L complex, a complex that recognizes stalled ribosomes and triggers the No-Go Decay (NGD) pathway. In the Pelota-HBS1L complex, pelo recognizes ribosomes stalled at the 3' end of an mRNA and engages stalled ribosomes by destabilizing mRNA in the mRNA channel. Following ribosome-binding, the Pelota-HBS1L complex promotes the disassembly of stalled ribosomes, followed by degradation of damaged mRNAs as part of the NGD pathway. The sequence is that of Protein PELOTA 2 (PEL2) from Arabidopsis thaliana (Mouse-ear cress).